Reading from the N-terminus, the 363-residue chain is MQLQEIAQKLGCAYEGDPTLEIHSVASLAEARPGELSFLSEARYLPLLEQTQASAVIVEEGLALPCSIACLRGRDPRLLFAQAIELFYQPYRLPVGIHPTAVIDPSVELGEGVAIGPHAVVMEGVKIGDHTQIHPNVTIYPHVRIGSRCQLFANCVIHERTEIGDDCLIHSGAVIGDDGFGHIPLADGSWRRMLQAGRVVLEDNVEVGSNTTIDRAAVGETRIGRGTKIDNLVQIGHGVRTGSHCLIVAQVGIAGSTQLGHHVILAGQCGLAGHLHIGDGVRVAAQTGVTSDVPAGQTVAGYPHQPIAEWRKSMAVQRHLPELQRTLRKLEARVAKLEQNSTDRAPNAKMLEVGVDPETTCSS.

His-237 (proton acceptor) is an active-site residue. Residues 338 to 363 (EQNSTDRAPNAKMLEVGVDPETTCSS) are disordered.

This sequence belongs to the transferase hexapeptide repeat family. LpxD subfamily. As to quaternary structure, homotrimer.

The catalysed reaction is a UDP-3-O-[(3R)-3-hydroxyacyl]-alpha-D-glucosamine + a (3R)-hydroxyacyl-[ACP] = a UDP-2-N,3-O-bis[(3R)-3-hydroxyacyl]-alpha-D-glucosamine + holo-[ACP] + H(+). Its pathway is bacterial outer membrane biogenesis; LPS lipid A biosynthesis. Catalyzes the N-acylation of UDP-3-O-acylglucosamine using 3-hydroxyacyl-ACP as the acyl donor. Is involved in the biosynthesis of lipid A, a phosphorylated glycolipid that anchors the lipopolysaccharide to the outer membrane of the cell. This Synechococcus sp. (strain JA-2-3B'a(2-13)) (Cyanobacteria bacterium Yellowstone B-Prime) protein is UDP-3-O-acylglucosamine N-acyltransferase.